A 714-amino-acid chain; its full sequence is Stellatatriene synthase (714 aa).

The stellata-2,6,19-trien synthase stretch occupies residues 1–325 (MEYKFSTVVD…RYNSSGSFSD (325 aa)). Mg(2+) is bound by residues Asp-92 and Asp-96. Positions 92-96 (DDVTD) match the DDXXD motif 1 motif. The NSE motif motif lies at 276 to 284 (YLKIVEEYK). Residues 326–713 (HQLELMKNGV…LRLIMELLKT (388 aa)) are geranylgeranyl diphosphate synthase. The disordered stretch occupies residues 332–356 (KNGVPKDPASGSTNGTSNGTSNGTS). The segment covering 341–356 (SGSTNGTSNGTSNGTS) has biased composition (low complexity). 3 residues coordinate isopentenyl diphosphate: Lys-434, Arg-437, and His-466. Mg(2+)-binding residues include Asp-473 and Asp-477. The DDXXD motif 2 motif lies at 473 to 477 (DDVED). Arg-482 is a dimethylallyl diphosphate binding site. Arg-483 contacts isopentenyl diphosphate. Residues Lys-560, Thr-561, Gln-596, Asn-603, Lys-613, and Lys-623 each contribute to the dimethylallyl diphosphate site.

In the N-terminal section; belongs to the terpene synthase family. This sequence in the C-terminal section; belongs to the FPP/GGPP synthase family. Hexamer.

The enzyme catalyses 4 isopentenyl diphosphate + dimethylallyl diphosphate = (2E,6E,10E,14E)-geranylfarnesyl diphosphate + 4 diphosphate. It catalyses the reaction (2E,6E,10E,14E)-geranylfarnesyl diphosphate = stellata-2,6,19-triene + diphosphate. The protein operates within secondary metabolite biosynthesis; terpenoid biosynthesis. Its function is as follows. Multifunctional diterpene synthase; part of the gene cluster that mediates the biosynthesis of the sesterterpene stellatic acid. The first step in the pathway is performed by the stellatatriene synthase that possesses both prenyl transferase and terpene cyclase activity, converting isopentenyl diphosphate and dimethylallyl diphosphate into geranylgeranyl diphosphate (GGDP) and then converting GGDP into stellata-2,6,19-triene. The cytochrome P450 monooxygenase Stl-P450 then catalyzes three successive oxidation reactions on the C-20 methyl group to generate the carboxylic acid of stellatic acid. This is Stellatatriene synthase from Emericella variicolor (Aspergillus stellatus).